The following is a 778-amino-acid chain: Actin-binding LIM protein 1 (778 aa).

4 LIM zinc-binding domains span residues 97–156, 156–216, 224–283, and 283–343; these read IHCH…MYGT, TRCH…MSSS, SNCA…LFGV, and VKCE…TKTE. Ser216 carries the post-translational modification Phosphoserine. The disordered stretch occupies residues 339 to 370; it reads STKTEEKLRPTRTSSESIYSRPGSSIPGSPGH. Residues 360 to 369 show a composition bias toward low complexity; that stretch reads PGSSIPGSPG. Ser367 is modified (phosphoserine). Phosphotyrosine is present on residues Tyr373 and Tyr396. Disordered regions lie at residues 414–510 and 552–597; these read YDDK…QAPK and AAQA…EELL. Ser422, Ser426, and Ser431 each carry phosphoserine. Polar residues predominate over residues 423 to 434; it reads LGESPRTLSPTP. Position 433 is a phosphothreonine (Thr433). Residue Ser435 is modified to Phosphoserine. At Tyr439 the chain carries Phosphotyrosine. A compositionally biased stretch (polar residues) spans 449 to 474; that stretch reads RSTSQGSINSPVYSRHSYTPTTSRSP. Residues Ser452, Ser455, Ser458, Ser498, and Ser587 each carry the phosphoserine modification. Residues 590–614 are a coiled coil; that stretch reads EEDDEELLRRRQLQEEQLMKLNSGL. A Glycyl lysine isopeptide (Lys-Gly) (interchain with G-Cter in SUMO2) cross-link involves residue Lys620. Phosphoserine occurs at positions 640, 655, 677, and 706. In terms of domain architecture, HP spans 710–778; it reads MLEPKIFPYE…NDMKKKAKLF (69 aa).

In terms of assembly, binds F-actin. Interacts with ABRA. In terms of tissue distribution, detected in liver, heart, skeletal muscle, brain and retina, where it is concentrated in the inner segment and in the outer plexiform layers.

It localises to the cytoplasm. The protein resides in the cytoskeleton. Functionally, may act as scaffold protein. May play a role in the development of the retina. Has been suggested to play a role in axon guidance. The chain is Actin-binding LIM protein 1 (ABLIM1) from Homo sapiens (Human).